A 652-amino-acid chain; its full sequence is Acetyl-coenzyme A synthetase (652 aa).

CoA-binding positions include 191-194 (RAGR), Thr311, and Asn335. Residues 387–389 (GEP), 411–416 (DTWWQT), Asp500, and Arg515 contribute to the ATP site. CoA is bound at residue Ser523. Arg526 lines the ATP pocket. 3 residues coordinate Mg(2+): Val537, His539, and Ile542. Position 584 (Arg584) interacts with CoA. An N6-acetyllysine modification is found at Lys609.

It belongs to the ATP-dependent AMP-binding enzyme family. It depends on Mg(2+) as a cofactor. Acetylated. Deacetylation by the SIR2-homolog deacetylase activates the enzyme.

It carries out the reaction acetate + ATP + CoA = acetyl-CoA + AMP + diphosphate. Its function is as follows. Catalyzes the conversion of acetate into acetyl-CoA (AcCoA), an essential intermediate at the junction of anabolic and catabolic pathways. Acs undergoes a two-step reaction. In the first half reaction, Acs combines acetate with ATP to form acetyl-adenylate (AcAMP) intermediate. In the second half reaction, it can then transfer the acetyl group from AcAMP to the sulfhydryl group of CoA, forming the product AcCoA. In terms of biological role, enables the cell to use acetate during aerobic growth to generate energy via the TCA cycle, and biosynthetic compounds via the glyoxylate shunt. Acetylates CheY, the response regulator involved in flagellar movement and chemotaxis. In Sodalis glossinidius (strain morsitans), this protein is Acetyl-coenzyme A synthetase.